Consider the following 232-residue polypeptide: NAD(P)H-quinone oxidoreductase subunit K 1 (232 aa).

[4Fe-4S] cluster is bound by residues Cys49, Cys50, Cys114, and Cys145.

It belongs to the complex I 20 kDa subunit family. As to quaternary structure, NDH-1 can be composed of about 15 different subunits; different subcomplexes with different compositions have been identified which probably have different functions. The cofactor is [4Fe-4S] cluster.

The protein resides in the cellular thylakoid membrane. The enzyme catalyses a plastoquinone + NADH + (n+1) H(+)(in) = a plastoquinol + NAD(+) + n H(+)(out). The catalysed reaction is a plastoquinone + NADPH + (n+1) H(+)(in) = a plastoquinol + NADP(+) + n H(+)(out). Functionally, NDH-1 shuttles electrons from an unknown electron donor, via FMN and iron-sulfur (Fe-S) centers, to quinones in the respiratory and/or the photosynthetic chain. The immediate electron acceptor for the enzyme in this species is believed to be plastoquinone. Couples the redox reaction to proton translocation, and thus conserves the redox energy in a proton gradient. Cyanobacterial NDH-1 also plays a role in inorganic carbon-concentration. This Acaryochloris marina (strain MBIC 11017) protein is NAD(P)H-quinone oxidoreductase subunit K 1.